The following is a 195-amino-acid chain: MRRWKAAALVSLICSSLLSVWMCQEGLLLGHRLGPALAPLRRPPRTLDARIARLAQYRALLQGAPDAVELRELSPWAARIPGPRRRAGPRRRRARPGARPCGLRELEVRVSELGLGYTSDETVLFRYCAGACEAAIRIYDLGLRRLRQRRRVRRERARAHPCCRPTAYEDEVSFLDVHSRYHTLQELSARECACV.

Positions 1-19 (MRRWKAAALVSLICSSLLS) are cleaved as a signal peptide. Residues 20 to 95 (VWMCQEGLLL…RAGPRRRRAR (76 aa)) constitute a propeptide that is removed on maturation. 3 cysteine pairs are disulfide-bonded: C101-C163, C128-C192, and C132-C194. R147, R156, and R158 together coordinate heparan sulfate group.

This sequence belongs to the TGF-beta family. GDNF subfamily. In terms of assembly, homodimer; disulfide-linked. Interacts with GFRA2 coreceptor and RET: forms a 2:2:2 ternary complex composed of NRTN ligand, GFRA2 and RET receptor. Also forms a 4:4:4 tetrameric complex composed of 4 copies of NRTN ligand, GFRA2 and RET receptor, which prevents endocytosis of RET. In terms of tissue distribution, widespread distribution.

Its subcellular location is the secreted. In terms of biological role, growth factor that supports the survival of sympathetic neurons in culture. May regulate the development and maintenance of the CNS. Involved in the development of the neural crest. Might control the size of non-neuronal cell population such as haemopoietic cells. Acts by binding to its coreceptor, GFRA2, leading to autophosphorylation and activation of the RET receptor. Heparan sulfate-binding is required for signaling. This is Neurturin (Nrtn) from Mus musculus (Mouse).